A 217-amino-acid polypeptide reads, in one-letter code: Putative peroxiredoxin Q, chloroplastic (217 aa).

A chloroplast-targeting transit peptide spans 1–66; that stretch reads MAFAVSTACR…PSTTGRNRIV (66 aa). Residues 70–217 form the Thioredoxin domain; it reads VSKGSAAPNF…GETLKILQSL (148 aa). Residue C112 is the Cysteine sulfenic acid (-SOH) intermediate of the active site. A disulfide bridge connects residues C112 and C117.

The protein belongs to the peroxiredoxin family. BCP/PrxQ subfamily. In terms of assembly, monomer.

The protein resides in the plastid. The protein localises to the chloroplast thylakoid lumen. It catalyses the reaction a hydroperoxide + [thioredoxin]-dithiol = an alcohol + [thioredoxin]-disulfide + H2O. Thiol-specific peroxidase that catalyzes the reduction of hydrogen peroxide and organic hydroperoxides to water and alcohols, respectively. Plays a role in cell protection against oxidative stress by detoxifying peroxides. The sequence is that of Putative peroxiredoxin Q, chloroplastic from Oryza sativa subsp. indica (Rice).